We begin with the raw amino-acid sequence, 101 residues long: Small ribosomal subunit protein uS14 (101 aa).

Belongs to the universal ribosomal protein uS14 family. Part of the 30S ribosomal subunit. Contacts proteins S3 and S10.

In terms of biological role, binds 16S rRNA, required for the assembly of 30S particles and may also be responsible for determining the conformation of the 16S rRNA at the A site. This chain is Small ribosomal subunit protein uS14, found in Blochmanniella pennsylvanica (strain BPEN).